A 283-amino-acid chain; its full sequence is Protein/nucleic acid deglycase HchA (283 aa).

Residues H86, E91, and H123 each contribute to the Zn(2+) site. Catalysis depends on C185, which acts as the Nucleophile.

It belongs to the peptidase C56 family. HchA subfamily. As to quaternary structure, homodimer.

It is found in the cytoplasm. It catalyses the reaction N(omega)-(1-hydroxy-2-oxopropyl)-L-arginyl-[protein] + H2O = lactate + L-arginyl-[protein] + H(+). It carries out the reaction N(6)-(1-hydroxy-2-oxopropyl)-L-lysyl-[protein] + H2O = lactate + L-lysyl-[protein] + H(+). The enzyme catalyses S-(1-hydroxy-2-oxopropyl)-L-cysteinyl-[protein] + H2O = lactate + L-cysteinyl-[protein] + H(+). The catalysed reaction is N(omega)-(1-hydroxy-2-oxoethyl)-L-arginyl-[protein] + H2O = L-arginyl-[protein] + glycolate + H(+). It catalyses the reaction N(6)-(1-hydroxy-2-oxoethyl)-L-lysyl-[protein] + H2O = glycolate + L-lysyl-[protein] + H(+). It carries out the reaction S-(1-hydroxy-2-oxoethyl)-L-cysteinyl-[protein] + H2O = glycolate + L-cysteinyl-[protein] + H(+). The enzyme catalyses N(2)-(1-hydroxy-2-oxopropyl)-dGTP + H2O = lactate + dGTP + H(+). The catalysed reaction is N(2)-(1-hydroxy-2-oxopropyl)-GTP + H2O = lactate + GTP + H(+). It catalyses the reaction N(2)-(1-hydroxy-2-oxopropyl)-GDP + H2O = lactate + GDP + H(+). It carries out the reaction N(2)-(1-hydroxy-2-oxopropyl)-GMP + H2O = lactate + GMP + H(+). The enzyme catalyses N(2)-(1-hydroxy-2-oxoethyl)-dGTP + H2O = dGTP + glycolate + H(+). The catalysed reaction is N(2)-(1-hydroxy-2-oxoethyl)-GTP + H2O = glycolate + GTP + H(+). It catalyses the reaction N(2)-(1-hydroxy-2-oxoethyl)-GDP + H2O = glycolate + GDP + H(+). It carries out the reaction N(2)-(1-hydroxy-2-oxoethyl)-GMP + H2O = glycolate + GMP + H(+). The enzyme catalyses an N(2)-(1-hydroxy-2-oxopropyl)-guanosine in RNA + H2O = a guanosine in RNA + lactate + H(+). The catalysed reaction is an N(2)-(1-hydroxy-2-oxopropyl)-2'-deoxyguanosine in DNA + H2O = a 2'-deoxyguanosine in DNA + lactate + H(+). It catalyses the reaction an N(2)-(1-hydroxy-2-oxoethyl)-guanosine in RNA + H2O = a guanosine in RNA + glycolate + H(+). It carries out the reaction an N(2)-(1-hydroxy-2-oxoethyl)-2'-deoxyguanosine in DNA + H2O = a 2'-deoxyguanosine in DNA + glycolate + H(+). In terms of biological role, protein and nucleotide deglycase that catalyzes the deglycation of the Maillard adducts formed between amino groups of proteins or nucleotides and reactive carbonyl groups of glyoxals. Thus, functions as a protein deglycase that repairs methylglyoxal- and glyoxal-glycated proteins, and releases repaired proteins and lactate or glycolate, respectively. Deglycates cysteine, arginine and lysine residues in proteins, and thus reactivates these proteins by reversing glycation by glyoxals. Acts on early glycation intermediates (hemithioacetals and aminocarbinols), preventing the formation of Schiff bases and advanced glycation endproducts (AGE). Also functions as a nucleotide deglycase able to repair glycated guanine in the free nucleotide pool (GTP, GDP, GMP, dGTP) and in DNA and RNA. Is thus involved in a major nucleotide repair system named guanine glycation repair (GG repair), dedicated to reversing methylglyoxal and glyoxal damage via nucleotide sanitization and direct nucleic acid repair. Plays an important role in protecting cells from carbonyl stress. The sequence is that of Protein/nucleic acid deglycase HchA from Escherichia coli O8 (strain IAI1).